Consider the following 54-residue polypeptide: Large ribosomal subunit protein bL32 (54 aa).

The tract at residues 1–26 (MAVQKNKPTRSKRGMRRSHDSLTAPH) is disordered. A compositionally biased stretch (basic residues) spans 7 to 16 (KPTRSKRGMR).

This sequence belongs to the bacterial ribosomal protein bL32 family.

The chain is Large ribosomal subunit protein bL32 from Buchnera aphidicola subsp. Acyrthosiphon pisum (strain 5A).